A 440-amino-acid chain; its full sequence is MPKPVVAVVGRPNVGKSTFFNYLVGKRISIVEDTPGVTRDRIYAEVEWRNKKFTLIDTGGIEPYSEDKIMQQMKRQAEIAIETADIIIFMVDVKDGVTASDKEVATLLRKTKKPVIVAVNKVDKIGELPADFYEFYNLGFGELMAISSIHGLGMGDLLDEIFKYFPEEDAEDYDEDVIKVAVVGKPNVGKSSLINRILGEERVIVSDIPGTTRDAIDTFVENEHGKFVFIDTAGIRRQSKINEKIEKYSIIRSWTAIERADVCLILIDAKEGVTEQDTKIAGYAHEQGKASIIVVNKWDLIEKQTGTLEEYRRTVHEKLGFMLYAPVIFISALTGQRVDRIYGLIKHVADQAAMRISTGVLNDLLNEATAMVQPPSDKGKRLKIYYMTQSSVKPPSFVLFINNMELMHYSYERYLENQLRKSFGFEGTPIKFILREKEKE.

EngA-type G domains are found at residues 4–169 and 178–353; these read PVVA…PEED and IKVA…DQAA. GTP-binding positions include 10-17, 57-61, 120-123, 184-191, 231-235, and 296-299; these read GRPNVGKS, DTGGI, NKVD, GKPNVGKS, DTAGI, and NKWD. The 85-residue stretch at 354 to 438 folds into the KH-like domain; the sequence is MRISTGVLND…PIKFILREKE (85 aa).

This sequence belongs to the TRAFAC class TrmE-Era-EngA-EngB-Septin-like GTPase superfamily. EngA (Der) GTPase family. In terms of assembly, associates with the 50S ribosomal subunit.

In terms of biological role, GTPase that plays an essential role in the late steps of ribosome biogenesis. This is GTPase Der from Acetivibrio thermocellus (strain ATCC 27405 / DSM 1237 / JCM 9322 / NBRC 103400 / NCIMB 10682 / NRRL B-4536 / VPI 7372) (Clostridium thermocellum).